The chain runs to 481 residues: MELRNKKISLDDFMSERFHVLKTWHTGKDVENFEDGVKYQQTIPESKNFARALFEADCNGITLSQPRAGVALIEEHIELLKTLQKDCDLLPTTIDAYTRLNRYEEAAVGIQKSIEAGTSKLNGLPVVNHGVKACRRITESLSKPLQIRHGTPDARLLAEIAMASGFTSYEGGGISYNIPYAKRVTLEKSIRDWQYCDRLIGVYEEHGIRINREPFGPLTGTLIPPFVSHAVAIIEGLLALEQGVKSVTVGYGQVGNIVQDIAAIQSLRELAHEYFRANGYENYELSTVFHQWMGGFPEDESRAFAVISWGAAVAGMAGATKVITKSPHEAYGIPTAEANGQGLRASNQMLNMVRDQKFPPCVEVDREVALIKREVRAVMDKVLELGQGDIAIGTVRAFEAGVLDVPFAPATCNSGKMMPIRDNHGAIRVFDPGSVPLPKDVLTLHHDFIAERAKEEGRIPSFQMIIDDINAVSHSKLIGRP.

Arg67 is an L-glutamate binding site. Gly69 lines the adenosylcob(III)alamin pocket. Arg99 provides a ligand contact to L-glutamate. Asn122 provides a ligand contact to adenosylcob(III)alamin. Residues 148 to 149 (RH), Glu170, and Tyr176 contribute to the L-glutamate site. Adenosylcob(III)alamin is bound at residue Pro179. Tyr180 is an L-glutamate binding site. The adenosylcob(III)alamin site is built by Phe296, Lys325, Glu329, and Ile333.

It belongs to the methylaspartate mutase GlmE subunit family. As to quaternary structure, heterotetramer composed of 2 epsilon subunits (GlmE) and 2 sigma subunits (GlmS). GlmE exists as a homodimer and GlmS as a monomer. Adenosylcob(III)alamin serves as cofactor.

It carries out the reaction (2S,3S)-3-methyl-L-aspartate = L-glutamate. It functions in the pathway amino-acid degradation; L-glutamate degradation via mesaconate pathway; acetate and pyruvate from L-glutamate: step 1/4. Functionally, catalyzes the carbon skeleton rearrangement of L-glutamate to L-threo-3-methylaspartate ((2S,3S)-3-methylaspartate). The protein is Glutamate mutase epsilon subunit of Yersinia enterocolitica serotype O:8 / biotype 1B (strain NCTC 13174 / 8081).